Here is a 466-residue protein sequence, read N- to C-terminus: Vimentin (466 aa).

Residues 1–13 (MSTRSVSSSSYRR) show a composition bias toward low complexity. Positions 1-31 (MSTRSVSSSSYRRMFGGPGTASRPSSTRSYV) are disordered. N-acetylserine is present on Ser-2. A head region spans residues 2–95 (STRSVSSSSY…FSLADAINTE (94 aa)). At Ser-5 the chain carries Phosphoserine. Phosphoserine; by PKA and PKC; alternate is present on Ser-7. An O-linked (GlcNAc) serine; alternate glycan is attached at Ser-7. Ser-8 bears the Phosphoserine mark. Ser-9 and Ser-10 each carry phosphoserine; by PKC. Thr-20 is modified (phosphothreonine). A Phosphoserine; by PKA and PKC modification is found at Ser-25. Phosphoserine; by PKC is present on Ser-26. Thr-33 carries O-linked (GlcNAc) threonine glycosylation. Ser-34 carries an O-linked (GlcNAc) serine; alternate glycan. A Phosphoserine; by PKC; alternate modification is found at Ser-34. A Phosphoserine; by CaMK2, PKA, PKC and ROCK2 modification is found at Ser-39. Ser-42 carries the phosphoserine; by PKC modification. Ser-49 is modified (phosphoserine). At Tyr-53 the chain carries Phosphotyrosine. A Phosphoserine modification is found at Ser-55. Phosphoserine; by CDK5 and CDK1 is present on Ser-56. Tyr-61 is modified (phosphotyrosine). Phosphoserine; by PKA and PKC is present on Ser-66. A Phosphoserine; by AURKB and ROCK2 modification is found at Ser-72. Ser-83 is subject to Phosphoserine; by CaMK2. Ser-87 bears the Phosphoserine mark. Positions 96–131 (FKNTRTNEKVELQELNDRFANYIDKVRFLEQQNKIL) are coil 1A. A coiled-coil region spans residues 96-131 (FKNTRTNEKVELQELNDRFANYIDKVRFLEQQNKIL). Residues 103 to 411 (EKVELQELND…KLLEGEESRI (309 aa)) enclose the IF rod domain. Residue Lys-104 forms a Glycyl lysine isopeptide (Lys-Gly) (interchain with G-Cter in SUMO2) linkage. Tyr-117 bears the Phosphotyrosine mark. Lys-120, Lys-129, and Lys-139 each carry N6-acetyllysine; alternate. 2 positions are modified to N6-succinyllysine; alternate: Lys-120 and Lys-129. Residues Lys-120, Lys-129, and Lys-139 each participate in a glycyl lysine isopeptide (Lys-Gly) (interchain with G-Cter in SUMO2); alternate cross-link. The linker 1 stretch occupies residues 132 to 153 (LAELEQLKGQGKSRLGDLYEEE). Ser-144 is subject to Phosphoserine. The stretch at 154–245 (MRELRRQVDQ…KLHDEEIQEL (92 aa)) forms a coiled coil. The tract at residues 154-245 (MRELRRQVDQ…KLHDEEIQEL (92 aa)) is coil 1B. Lys-168 is modified (N6-acetyllysine). Lys-188 bears the N6-acetyllysine; alternate mark. Lys-188 carries the N6-succinyllysine; alternate modification. Ser-214 is subject to Phosphoserine. Lys-223 carries the post-translational modification N6-acetyllysine; alternate. Lys-223 participates in a covalent cross-link: Glycyl lysine isopeptide (Lys-Gly) (interchain with G-Cter in SUMO2); alternate. Residue Ser-226 is modified to Phosphoserine. Residue Lys-235 is modified to N6-acetyllysine. Positions 246-268 (QAQIQEQHVQIDMDVSKPDLTAA) are linker 12. Lys-262 is covalently cross-linked (Glycyl lysine isopeptide (Lys-Gly) (interchain with G-Cter in SUMO2)). Positions 269-407 (LRDVRQQYES…ATYRKLLEGE (139 aa)) are coil 2. Lys-294 is subject to N6-acetyllysine; alternate. An N6-succinyllysine; alternate modification is found at Lys-294. Lys-294 participates in a covalent cross-link: Glycyl lysine isopeptide (Lys-Gly) (interchain with G-Cter in SUMO2); alternate. Position 299 is a phosphoserine (Ser-299). The stretch at 303 to 407 (NRNNDALRQA…ATYRKLLEGE (105 aa)) forms a coiled coil. A Glycyl lysine isopeptide (Lys-Gly) (interchain with G-Cter in SUMO2) cross-link involves residue Lys-313. The [IL]-x-C-x-x-[DE] motif motif lies at 326-329 (LTCE). Lys-373 carries the post-translational modification N6-acetyllysine; alternate. Lys-373 participates in a covalent cross-link: Glycyl lysine isopeptide (Lys-Gly) (interchain with G-Cter in SUMO2); alternate. Residues 408–466 (ESRISLPLPNFSSLNLRETNLDSLPLVDTHSKRTLLIKTVETRDGQVINETSQHHDDLE) form a tail region. 4 positions are modified to phosphoserine: Ser-409, Ser-412, Ser-419, and Ser-420. A Phosphothreonine modification is found at Thr-426. A Phosphoserine modification is found at Ser-430. The residue at position 436 (Thr-436) is a Phosphothreonine. Position 438 is a phosphoserine (Ser-438). Lys-439 participates in a covalent cross-link: Glycyl lysine isopeptide (Lys-Gly) (interchain with G-Cter in SUMO2). An N6-acetyllysine; alternate modification is found at Lys-445. Lys-445 carries the post-translational modification N6-succinyllysine; alternate. Lys-445 is covalently cross-linked (Glycyl lysine isopeptide (Lys-Gly) (interchain with G-Cter in SUMO2); alternate). A Glycyl lysine isopeptide (Lys-Gly) (interchain with G-Cter in SUMO1); alternate cross-link involves residue Lys-445. 2 positions are modified to phosphothreonine: Thr-446 and Thr-458. Phosphoserine is present on Ser-459.

The protein belongs to the intermediate filament family. In terms of assembly, homomer assembled from elementary dimers. Identified in complexes that contain VIM, EZR, AHNAK, BFSP1, BFSP2, ANK2, PLEC, PRX and spectrin. Interacts with BCAS3. Interacts with LGSN. Interacts with SYNM. Interacts (via rod region) with PLEC (via CH 1 domain). Interacts with STK33. Interacts with LARP6. Interacts with RAB8B. Interacts with TOR1A; the interaction associates TOR1A with the cytoskeleton. Interacts with TOR1AIP1. Interacts with TOR1AIP1. Interacts with DIAPH1. Interacts with EPPK1; interaction is dependent of higher-order structure of intermediate filament. Interacts with the non-receptor tyrosine kinase SRMS; the interaction leads to phosphorylation of VIM. Interacts with NOD2. Interacts (via head region) with CORO1C. Interacts with HDGF. Interacts with PRKCE (via phorbol-ester/DAG-type 2 domain). Interacts with BFSP2. Interacts with PPL. Interacts with PKP1 and PKP2. Interacts with SCRIB (via PDZ domains); the interaction protects SCRIB from proteasomal degradation and facilitates SCRIB localization to intermediate filaments, the interaction is reduced by cell contact inhibition. In terms of processing, one of the most prominent phosphoproteins in various cells of mesenchymal origin. Phosphorylation is enhanced during cell division, at which time vimentin filaments are significantly reorganized. Phosphorylation by PKN1 inhibits the formation of filaments. Filament disassembly during mitosis is promoted by phosphorylation at Ser-55 as well as by nestin. Phosphorylated at Ser-56 by CDK5 during neutrophil secretion in the cytoplasm. Phosphorylated by STK33. Phosphorylated on tyrosine residues by SRMS. Post-translationally, S-nitrosylation is induced by interferon-gamma and oxidatively-modified low-densitity lipoprotein (LDL(ox)) possibly implicating the iNOS-S100A8/9 transnitrosylase complex.

The protein localises to the cytoplasm. Its subcellular location is the cytoskeleton. It localises to the nucleus matrix. It is found in the cell membrane. Vimentins are class-III intermediate filaments found in various non-epithelial cells, especially mesenchymal cells. Vimentin is attached to the nucleus, endoplasmic reticulum, and mitochondria, either laterally or terminally. Plays a role in cell directional movement, orientation, cell sheet organization and Golgi complex polarization at the cell migration front. Protects SCRIB from proteasomal degradation and facilitates its localization to intermediate filaments in a cell contact-mediated manner. In terms of biological role, involved with LARP6 in the stabilization of type I collagen mRNAs for CO1A1 and CO1A2. The chain is Vimentin (VIM) from Bos taurus (Bovine).